Here is a 354-residue protein sequence, read N- to C-terminus: Glutamine synthetase (354 aa).

One can recognise a GS beta-grasp domain in the interval 22-101 (IQAEYVWIDG…VLAETYNNDG (80 aa)). One can recognise a GS catalytic domain in the interval 108–354 (HRHHAKKVFD…IIAETTILDK (247 aa)).

This sequence belongs to the glutamine synthetase family. In terms of assembly, homooctamer.

Its subcellular location is the cytoplasm. It catalyses the reaction L-glutamate + NH4(+) + ATP = L-glutamine + ADP + phosphate + H(+). The protein is Glutamine synthetase (glnA) of Agaricus bisporus (White button mushroom).